A 299-amino-acid polypeptide reads, in one-letter code: CMRF35-like molecule 8 (299 aa).

The signal sequence occupies residues 1–17 (MWLPWALLLLWVPGCFA). The Extracellular segment spans residues 18–180 (LSKCRTVAGP…TEEVVNSQLP (163 aa)). Positions 19 to 123 (SKCRTVAGPV…HDPVVEVEVS (105 aa)) constitute an Ig-like V-type domain. C36 and C103 are joined by a disulfide. N83 and N92 each carry an N-linked (GlcNAc...) asparagine glycan. Residues 181-201 (LLLSLLALLLLLLVGASLLAW) traverse the membrane as a helical segment. Residues 202–299 (RMFQKWIKAG…DSDYSVIRKT (98 aa)) are Cytoplasmic-facing. The disordered stretch occupies residues 278–299 (RIAAQRPREEEPDSDYSVIRKT). Y293 bears the Phosphotyrosine mark.

This sequence belongs to the CD300 family. Upon tyrosine-phosphorylation, interacts with PTN6/SHP-1 and PTPN11/SHP-2 and INPP5D. Post-translationally, phosphorylated on tyrosine. N-glycosylated. In terms of tissue distribution, expressed not only by natural killer (NK) cells but also by T-cell subsets, B-cells, dendritic cells, mast cells, granulocytes and monocytes.

The protein localises to the cell membrane. Functionally, inhibitory receptor which may contribute to the down-regulation of cytolytic activity in natural killer (NK) cells, and to the down-regulation of mast cell degranulation. Negatively regulates the Toll-like receptor (TLR) signaling mediated by MYD88 but not TRIF through activation of PTPN6. This chain is CMRF35-like molecule 8 (CD300A), found in Homo sapiens (Human).